We begin with the raw amino-acid sequence, 167 residues long: Interferon gamma (167 aa).

The first 23 residues, 1–23 (MSYTSYILAFQLCLILGSYGCYC), serve as a signal peptide directing secretion. Pyrrolidone carboxylic acid is present on Gln-24. N-linked (GlcNAc...) asparagine glycosylation is found at Asn-41, Asn-108, and Asn-117.

Belongs to the type II (or gamma) interferon family. As to quaternary structure, homodimer. Interacts with IFNGR1 (via extracellular domain); this interaction promotes IFNGR1 dimerization. Released primarily from activated T lymphocytes.

It localises to the secreted. In terms of biological role, type II interferon produced by immune cells such as T-cells and NK cells that plays crucial roles in antimicrobial, antiviral, and antitumor responses by activating effector immune cells and enhancing antigen presentation. Primarily signals through the JAK-STAT pathway after interaction with its receptor IFNGR1 to affect gene regulation. Upon IFNG binding, IFNGR1 intracellular domain opens out to allow association of downstream signaling components JAK2, JAK1 and STAT1, leading to STAT1 activation, nuclear translocation and transcription of IFNG-regulated genes. Many of the induced genes are transcription factors such as IRF1 that are able to further drive regulation of a next wave of transcription. Plays a role in class I antigen presentation pathway by inducing a replacement of catalytic proteasome subunits with immunoproteasome subunits. In turn, increases the quantity, quality, and repertoire of peptides for class I MHC loading. Increases the efficiency of peptide generation also by inducing the expression of activator PA28 that associates with the proteasome and alters its proteolytic cleavage preference. Up-regulates as well MHC II complexes on the cell surface by promoting expression of several key molecules such as cathepsins B/CTSB, H/CTSH, and L/CTSL. Participates in the regulation of hematopoietic stem cells during development and under homeostatic conditions by affecting their development, quiescence, and differentiation. In Oryctolagus cuniculus (Rabbit), this protein is Interferon gamma (IFNG).